The chain runs to 332 residues: Melanocortin receptor 4 (332 aa).

Over 1-43 the chain is Extracellular; that stretch reads MVNSTHRGMHASLHLWNRSSHRLHSNASESLGKGYSDGGCYEQ. Residues Asn3, Asn17, and Asn26 are each glycosylated (N-linked (GlcNAc...) asparagine). Disulfide bonds link Cys40/Cys279 and Cys271/Cys277. A helical membrane pass occupies residues 44–69; that stretch reads LFVSPEVFVTLGVISLLENILVIVAI. Over 70–81 the chain is Cytoplasmic; it reads AKNKNLHSPMYF. The helical transmembrane segment at 82–106 threads the bilayer; it reads FICSLAVADMLVSVSNGSETIVITL. Positions 100, 122, and 126 each coordinate Ca(2+). Topologically, residues 107–123 are extracellular; it reads LNSTDTDTQSFTVNIDN. A helical membrane pass occupies residues 124-145; it reads VIDSVICSSLLASICSLLSIAV. At 146-165 the chain is on the cytoplasmic side; sequence DRYFTIFYALQYHNIMTVKR. A helical transmembrane segment spans residues 166-186; it reads VRIIISCIWAACTVSGILFII. Over 187–191 the chain is Extracellular; it reads YSDSS. Residues 192–215 traverse the membrane as a helical segment; that stretch reads AVIICLITMFFTMLALMASLYVHM. The Cytoplasmic segment spans residues 216-248; it reads FLMARLHIKRIAVLPGTGAIRQGANMKGAITLT. A helical membrane pass occupies residues 249 to 271; sequence ILIGVFVVCWAPFFLHLIFYISC. The Extracellular segment spans residues 272-280; sequence PQNPYCVCF. The helical transmembrane segment at 281-304 threads the bilayer; the sequence is MSHFNLYLILIMCNSVIDPLIYAL. Over 305–332 the chain is Cytoplasmic; that stretch reads RSQELRKTFKEIICCYPLGGLCDLSSRY. Cys318 is lipidated: S-palmitoyl cysteine.

The protein belongs to the G-protein coupled receptor 1 family. Homodimer; disulfide-linked, also forms higher order oligomers. Interacts with GNAS. Interacts with ATRNL1. Interacts with MGRN1; this interaction competes with GNAS-binding and thus inhibits agonist-induced cAMP production. Interacts with MRAP and MRAP2; these associated factors increase ligand-sensitivity and generation of cAMP.

It localises to the cell membrane. In terms of biological role, hormone receptor that acts as a key component of the leptin-melanocortin pathway at the intersection of homeostatic maintenance of energetic state. Plays a role in regulating food intake: activation by a stimulating hormone such as anorexigenic alpha-melanocyte stimulating hormone (alpha-MSH) inhibits appetite, whereas binding to a natural antagonist like Agouti-related protein/AGRP promotes appetite. G-protein-coupled receptor that activates conventional Galphas signaling leading to induction of anorexogenic signaling in the hypothalamus to result in negative energy balance. Regulates the firing activity of neurons from the hypothalamus by alpha-MSH and AGRP independently of Galphas signaling by ligand-induced coupling of closure of inwardly rectifying potassium channel KCNJ13. In intestinal epithelial cells, plays a role in the inhibition of hepatic glucose production via nesfatin-1/NUCB2 leading to increased cyclic adenosine monophosphate (cAMP) levels and glucagon-like peptide 1 (GLP-1) secretion in the intestinal epithelium. The polypeptide is Melanocortin receptor 4 (MC4R) (Macaca fascicularis (Crab-eating macaque)).